We begin with the raw amino-acid sequence, 90 residues long: Auxin-responsive protein SAUR19 (90 aa).

Belongs to the ARG7 family. In terms of assembly, interacts with and inhibits PP2C-D subfamily of type 2C phosphatases such as PP2C67/PP2C-D1, PP2C64/PP2C-D5 and PP2C46/PP2C-D6.

The protein resides in the cell membrane. In terms of biological role, provide a mechanistic link between auxin and plasma membrane H(+)-ATPases (PM H(+)-ATPases, e.g. AHA1 and AHA2), and triggers PM H(+)-ATPases activity by promoting phosphorylation of their C-terminal autoinhibitory domain as a result of PP2C-D subfamily of type 2C phosphatases inhibition, thus leading to the acidification of the apoplast and the facilitation of solutes and water uptake to drive cell expansion. Prevents the apical hook maintenance of etiolated seedlings. Functions as positive effectors of cell expansion through modulation of auxin transport. This is Auxin-responsive protein SAUR19 from Arabidopsis thaliana (Mouse-ear cress).